The following is a 361-amino-acid chain: Phospho-N-acetylmuramoyl-pentapeptide-transferase (361 aa).

10 helical membrane passes run 28–48, 74–94, 99–119, 133–153, 168–188, 203–223, 236–256, 263–283, 288–308, and 338–358; these read LAIIITLSLSFITGPILIKFL, TMGGIMIILSSCLSTLLLADL, IWITLFGFISFGIIGFMDDYA, SKLLLQGIISLIICILLEYLD, LSLDLGYFYIVFAIFVIVGSS, VPIAFTAGSFALISYLVGNLI, TGELTVLCAGLVGSCLGFLWF, VFMGDTGSLSLGGVLGIISVI, IVLAIVGGLFVIETASVILQV, and KVVIRFWIISVIFALIGLSSL.

This sequence belongs to the glycosyltransferase 4 family. MraY subfamily. Requires Mg(2+) as cofactor.

The protein resides in the cell inner membrane. It carries out the reaction UDP-N-acetyl-alpha-D-muramoyl-L-alanyl-gamma-D-glutamyl-meso-2,6-diaminopimeloyl-D-alanyl-D-alanine + di-trans,octa-cis-undecaprenyl phosphate = di-trans,octa-cis-undecaprenyl diphospho-N-acetyl-alpha-D-muramoyl-L-alanyl-D-glutamyl-meso-2,6-diaminopimeloyl-D-alanyl-D-alanine + UMP. It participates in cell wall biogenesis; peptidoglycan biosynthesis. Its function is as follows. Catalyzes the initial step of the lipid cycle reactions in the biosynthesis of the cell wall peptidoglycan: transfers peptidoglycan precursor phospho-MurNAc-pentapeptide from UDP-MurNAc-pentapeptide onto the lipid carrier undecaprenyl phosphate, yielding undecaprenyl-pyrophosphoryl-MurNAc-pentapeptide, known as lipid I. The chain is Phospho-N-acetylmuramoyl-pentapeptide-transferase from Rickettsia felis (strain ATCC VR-1525 / URRWXCal2) (Rickettsia azadi).